The primary structure comprises 346 residues: Elongation factor Ts (346 aa).

Positions 80–83 (TDFV) are involved in Mg(2+) ion dislocation from EF-Tu.

It belongs to the EF-Ts family.

Its subcellular location is the cytoplasm. Its function is as follows. Associates with the EF-Tu.GDP complex and induces the exchange of GDP to GTP. It remains bound to the aminoacyl-tRNA.EF-Tu.GTP complex up to the GTP hydrolysis stage on the ribosome. The protein is Elongation factor Ts of Streptococcus uberis (strain ATCC BAA-854 / 0140J).